We begin with the raw amino-acid sequence, 204 residues long: Peptide deformylase (204 aa).

C131 and H174 together coordinate Fe cation. The active site involves E175. A Fe cation-binding site is contributed by H178.

The protein belongs to the polypeptide deformylase family. Fe(2+) serves as cofactor.

The catalysed reaction is N-terminal N-formyl-L-methionyl-[peptide] + H2O = N-terminal L-methionyl-[peptide] + formate. Removes the formyl group from the N-terminal Met of newly synthesized proteins. Requires at least a dipeptide for an efficient rate of reaction. N-terminal L-methionine is a prerequisite for activity but the enzyme has broad specificity at other positions. The polypeptide is Peptide deformylase (Streptococcus thermophilus (strain CNRZ 1066)).